The chain runs to 1522 residues: Lysophospholipase nte1 (1522 aa).

Residues 1-24 are disordered; it reads MADGVTQVDSTGLHSFSPSPSLSS. Over 1 to 65 the chain is Cytoplasmic; that stretch reads MADGVTQVDS…LPPVPTTMAG (65 aa). The span at 15 to 24 shows a compositional bias: low complexity; that stretch reads SFSPSPSLSS. A helical membrane pass occupies residues 66–86; sequence WIGWVFSFFFQVIPSVLYWII. Residues 87-108 lie on the Lumenal side of the membrane; it reads TFSTITLPTWLFTLFSMSLTFT. A helical transmembrane segment spans residues 109 to 129; the sequence is MNFTTLLLIVLAVVSTISWFI. The Cytoplasmic portion of the chain corresponds to 130–1522; that stretch reads RYRFLNMYSR…RTLAPRRASI (1393 aa). Disordered stretches follow at residues 308 to 384, 523 to 544, and 757 to 776; these read VPNS…SVHP, RAAT…GVSP, and TTTA…SRRR. Residues 369–381 show a composition bias toward basic residues; sequence ESRKHSSRKRRKS. A nucleoside 3',5'-cyclic phosphate-binding positions include 680 to 800 and 840 to 960; these read GGTS…AVAS and RLTS…IAQR. In terms of domain architecture, PNPLA spans 1219-1383; the sequence is LVLGGGGARG…IDNLTVDHMK (165 aa). Residues 1223–1228 carry the GXGXXG motif; the sequence is GGGARG. The short motif at 1250–1254 is the GXSXG element; sequence GTSIG. Ser1252 serves as the catalytic Nucleophile. Asp1370 serves as the catalytic Proton acceptor. A DGA/G motif is present at residues 1370-1372; sequence DGG. The disordered stretch occupies residues 1501-1522; the sequence is LPEETEEKKKLQRTLAPRRASI.

Belongs to the NTE family.

Its subcellular location is the endoplasmic reticulum membrane. The catalysed reaction is a 1-acyl-sn-glycero-3-phosphocholine + H2O = sn-glycerol 3-phosphocholine + a fatty acid + H(+). With respect to regulation, inhibited by organophosphorus esters. In terms of biological role, intracellular phospholipase B that catalyzes the double deacylation of phosphatidylcholine (PC) to glycerophosphocholine (GroPCho). Plays an important role in membrane lipid homeostasis. Responsible for the rapid PC turnover in response to inositol, elevated temperatures, or when choline is present in the growth medium. The protein is Lysophospholipase nte1 (nte1) of Aspergillus fumigatus (strain ATCC MYA-4609 / CBS 101355 / FGSC A1100 / Af293) (Neosartorya fumigata).